The chain runs to 344 residues: MPMQGAQRKLLGSLNSTPTATSNLGLAANHTGAPCLEVSIPDGLFLSLGLVSLVENVLVVAAIAKNRNLHSSMYCFICCLALSDLLVSGSNMLETAIILLLEAGTLATRASVVQQLHNTIDVLTCSSMLCSLCFLGAIAVDRYISIFYALRYHSIMTLPRAQRAIAAIWVTSVLSSTLFITYYDHAAVLLCLVVFFLAMLVLMAVLYVHMLARACQHAQGIIRLHNRQLPAHKGFGLRGAATLTILLGIFFLCWGPFFLHLTLVVFCPQHLTCNCIFKNFKVFLTLIICNTIIDPLIYAFRSQELRRTLKEVLLCSWWPGCGAEGGGDSVWPGSCVTLRGPLPP.

At 1–37 (MPMQGAQRKLLGSLNSTPTATSNLGLAANHTGAPCLE) the chain is on the extracellular side. N-linked (GlcNAc...) asparagine glycosylation occurs at N29. The helical transmembrane segment at 38-63 (VSIPDGLFLSLGLVSLVENVLVVAAI) threads the bilayer. The Cytoplasmic portion of the chain corresponds to 64-72 (AKNRNLHSS). The chain crosses the membrane as a helical span at residues 73–93 (MYCFICCLALSDLLVSGSNML). Topologically, residues 94-118 (ETAIILLLEAGTLATRASVVQQLHN) are extracellular. A helical membrane pass occupies residues 119-140 (TIDVLTCSSMLCSLCFLGAIAV). Topologically, residues 141-163 (DRYISIFYALRYHSIMTLPRAQR) are cytoplasmic. The helical transmembrane segment at 164–183 (AIAAIWVTSVLSSTLFITYY) threads the bilayer. Over 184–191 (DHAAVLLC) the chain is Extracellular. A helical membrane pass occupies residues 192–211 (LVVFFLAMLVLMAVLYVHML). The Cytoplasmic segment spans residues 212-240 (ARACQHAQGIIRLHNRQLPAHKGFGLRGA). A helical membrane pass occupies residues 241–266 (ATLTILLGIFFLCWGPFFLHLTLVVF). Residues 267 to 279 (CPQHLTCNCIFKN) lie on the Extracellular side of the membrane. Residues 280-300 (FKVFLTLIICNTIIDPLIYAF) traverse the membrane as a helical segment. Residues 301–344 (RSQELRRTLKEVLLCSWWPGCGAEGGGDSVWPGSCVTLRGPLPP) are Cytoplasmic-facing. Residue C315 is the site of S-palmitoyl cysteine attachment.

The protein belongs to the G-protein coupled receptor 1 family. Interacts with MGRN1, but does not undergo MGRN1-mediated ubiquitination; this interaction competes with GNAS-binding and thus inhibits agonist-induced cAMP production. Interacts with OPN3; the interaction results in a decrease in MC1R-mediated cAMP signaling and ultimately a decrease in melanin production in melanocytes.

The protein resides in the cell membrane. In terms of biological role, receptor for MSH (alpha, beta and gamma) and ACTH. The activity of this receptor is mediated by G proteins which activate adenylate cyclase. Mediates melanogenesis, the production of eumelanin (black/brown) and phaeomelanin (red/yellow), via regulation of cAMP signaling in melanocytes. The protein is Melanocyte-stimulating hormone receptor (MC1R) of Mico argentatus (Silvery marmoset).